The chain runs to 83 residues: Large ribosomal subunit protein eL43 (83 aa).

Zn(2+) is bound by residues Cys38, Cys41, Cys56, and Cys59. The C4-type zinc-finger motif lies at 38 to 59 (CPVCGRKAVKRISTGIWQCQKC).

The protein belongs to the eukaryotic ribosomal protein eL43 family. Putative zinc-binding subfamily. Part of the 50S ribosomal subunit. Zn(2+) is required as a cofactor.

In terms of biological role, binds to the 23S rRNA. This Pyrococcus furiosus (strain ATCC 43587 / DSM 3638 / JCM 8422 / Vc1) protein is Large ribosomal subunit protein eL43.